The chain runs to 137 residues: Integration host factor subunit beta (137 aa).

A compositionally biased stretch (basic and acidic residues) spans 75 to 92; it reads KRVPHFKAGKELRERVDR. The disordered stretch occupies residues 75 to 137; the sequence is KRVPHFKAGK…EGGGLNLARS (63 aa). Residues 128 to 137 show a composition bias toward gly residues; that stretch reads EGGGLNLARS.

Belongs to the bacterial histone-like protein family. As to quaternary structure, heterodimer of an alpha and a beta chain.

In terms of biological role, this protein is one of the two subunits of integration host factor, a specific DNA-binding protein that functions in genetic recombination as well as in transcriptional and translational control. The sequence is that of Integration host factor subunit beta from Cupriavidus pinatubonensis (strain JMP 134 / LMG 1197) (Cupriavidus necator (strain JMP 134)).